Reading from the N-terminus, the 177-residue chain is Large ribosomal subunit protein uL6 (177 aa).

It belongs to the universal ribosomal protein uL6 family. Part of the 50S ribosomal subunit.

Functionally, this protein binds to the 23S rRNA, and is important in its secondary structure. It is located near the subunit interface in the base of the L7/L12 stalk, and near the tRNA binding site of the peptidyltransferase center. The sequence is that of Large ribosomal subunit protein uL6 from Shewanella frigidimarina (strain NCIMB 400).